Here is a 124-residue protein sequence, read N- to C-terminus: Small ribosomal subunit protein uS12 (124 aa).

A 3-methylthioaspartic acid modification is found at aspartate 89.

It belongs to the universal ribosomal protein uS12 family. As to quaternary structure, part of the 30S ribosomal subunit. Contacts proteins S8 and S17. May interact with IF1 in the 30S initiation complex.

Functionally, with S4 and S5 plays an important role in translational accuracy. Its function is as follows. Interacts with and stabilizes bases of the 16S rRNA that are involved in tRNA selection in the A site and with the mRNA backbone. Located at the interface of the 30S and 50S subunits, it traverses the body of the 30S subunit contacting proteins on the other side and probably holding the rRNA structure together. The combined cluster of proteins S8, S12 and S17 appears to hold together the shoulder and platform of the 30S subunit. The polypeptide is Small ribosomal subunit protein uS12 (Prochlorococcus marinus (strain SARG / CCMP1375 / SS120)).